The following is a 368-amino-acid chain: Peptide chain release factor 2 (368 aa).

N5-methylglutamine is present on Gln250.

It belongs to the prokaryotic/mitochondrial release factor family. Methylated by PrmC. Methylation increases the termination efficiency of RF2.

Its subcellular location is the cytoplasm. Its function is as follows. Peptide chain release factor 2 directs the termination of translation in response to the peptide chain termination codons UGA and UAA. The protein is Peptide chain release factor 2 of Rickettsia bellii (strain RML369-C).